The following is a 130-amino-acid chain: UPF0146 protein AF_0739.1 (130 aa).

This sequence belongs to the UPF0146 family.

This Archaeoglobus fulgidus (strain ATCC 49558 / DSM 4304 / JCM 9628 / NBRC 100126 / VC-16) protein is UPF0146 protein AF_0739.1.